A 231-amino-acid chain; its full sequence is Small ribosomal subunit protein uS2 (231 aa).

This sequence belongs to the universal ribosomal protein uS2 family.

The chain is Small ribosomal subunit protein uS2 from Blochmanniella floridana.